The chain runs to 252 residues: MMLHAQHMPGQPGAPSLVFLHGFSGDCREWQSVGEQFHGCSRLYIDLPGHGGSTAIPVGGFADVIRLLRATLISYNILKFWLVGYSLGGRVAMMAACQGIPGLCGLVVEGGHPGLQNEQARAERRLSDGRWAERFRREPLTEVFHDWYQQPVFASLTAQQRQALTALRSQNNGETLAAMLEATSLAAQPDLREALNALAFPFYYLCGERDSKFRALAQEVAATCHVIRNAGHNAHRENPAGVVDSLAQILRL.

Belongs to the AB hydrolase superfamily. MenH family. Monomer.

The enzyme catalyses 5-enolpyruvoyl-6-hydroxy-2-succinyl-cyclohex-3-ene-1-carboxylate = (1R,6R)-6-hydroxy-2-succinyl-cyclohexa-2,4-diene-1-carboxylate + pyruvate. It participates in quinol/quinone metabolism; 1,4-dihydroxy-2-naphthoate biosynthesis; 1,4-dihydroxy-2-naphthoate from chorismate: step 3/7. Its pathway is quinol/quinone metabolism; menaquinone biosynthesis. In terms of biological role, catalyzes a proton abstraction reaction that results in 2,5-elimination of pyruvate from 2-succinyl-5-enolpyruvyl-6-hydroxy-3-cyclohexene-1-carboxylate (SEPHCHC) and the formation of 2-succinyl-6-hydroxy-2,4-cyclohexadiene-1-carboxylate (SHCHC). This is 2-succinyl-6-hydroxy-2,4-cyclohexadiene-1-carboxylate synthase from Salmonella agona (strain SL483).